A 441-amino-acid chain; its full sequence is Lysine histidine transporter-like 2 (441 aa).

Residues M1–K32 are Cytoplasmic-facing. The helical transmembrane segment at W33–P53 threads the bilayer. At Y54 to N58 the chain is on the extracellular side. The helical transmembrane segment at L59 to L79 threads the bilayer. Over W80–G110 the chain is Cytoplasmic. The chain crosses the membrane as a helical span at residues L111–V131. The Extracellular segment spans residues T132–Y155. Transmembrane regions (helical) follow at residues W156–I176 and S177–T197. Topologically, residues S198–N222 are extracellular. The chain crosses the membrane as a helical span at residues F223 to I243. Residues Q244–V264 lie on the Cytoplasmic side of the membrane. The helical transmembrane segment at V265–F285 threads the bilayer. The Extracellular segment spans residues G286–P300. Residues I301 to I321 form a helical membrane-spanning segment. At Y322–R347 the chain is on the cytoplasmic side. Residues F348 to G370 traverse the membrane as a helical segment. At L371–G373 the chain is on the extracellular side. Residues F374 to K396 form a helical membrane-spanning segment. Over K397–C406 the chain is Cytoplasmic. Residues I407–L427 traverse the membrane as a helical segment. Over R428–S441 the chain is Extracellular.

The protein belongs to the amino acid/polyamine transporter 2 family. Amino acid/auxin permease (AAAP) (TC 2.A.18.2) subfamily.

Its subcellular location is the cell membrane. Its function is as follows. Amino acid transporter. The sequence is that of Lysine histidine transporter-like 2 from Arabidopsis thaliana (Mouse-ear cress).